The chain runs to 156 residues: Transcriptional repressor NrdR (156 aa).

The segment at 3 to 34 (CPFCQHDDTQVLDTRISEEGDSIRRRRRCVSC) is a zinc-finger region. Residues 49 to 139 (PVIVKKNGSR…VYKSFEDVAE (91 aa)) enclose the ATP-cone domain.

This sequence belongs to the NrdR family. It depends on Zn(2+) as a cofactor.

Negatively regulates transcription of bacterial ribonucleotide reductase nrd genes and operons by binding to NrdR-boxes. In Herminiimonas arsenicoxydans, this protein is Transcriptional repressor NrdR.